Here is a 442-residue protein sequence, read N- to C-terminus: tRNA modification GTPase MnmE (442 aa).

(6S)-5-formyl-5,6,7,8-tetrahydrofolate contacts are provided by Arg27, Glu84, and Lys124. Residues 221–366 (GLHVVIVGAP…LLDALQAFAE (146 aa)) enclose the TrmE-type G domain. Residues 231–236 (NAGKSS), 250–256 (SEEAGTT), and 275–278 (DTAG) each bind GTP. Mg(2+) contacts are provided by Ser235 and Thr256. A (6S)-5-formyl-5,6,7,8-tetrahydrofolate-binding site is contributed by Lys442.

This sequence belongs to the TRAFAC class TrmE-Era-EngA-EngB-Septin-like GTPase superfamily. TrmE GTPase family. Homodimer. Heterotetramer of two MnmE and two MnmG subunits. K(+) is required as a cofactor.

The protein localises to the cytoplasm. Functionally, exhibits a very high intrinsic GTPase hydrolysis rate. Involved in the addition of a carboxymethylaminomethyl (cmnm) group at the wobble position (U34) of certain tRNAs, forming tRNA-cmnm(5)s(2)U34. In Brucella suis (strain ATCC 23445 / NCTC 10510), this protein is tRNA modification GTPase MnmE.